The primary structure comprises 2824 residues: Highly reducing polyketide synthase stpks1 (2824 aa).

In terms of domain architecture, Ketosynthase family 3 (KS3) spans 8 to 428 (PKPVAVVGIS…GANGHVIAES (421 aa)). Active-site for beta-ketoacyl synthase activity residues include Cys177, His312, and His348. The malonyl-CoA:ACP transacylase (MAT) domain stretch occupies residues 517–854 (QLVFVFSGQG…LTAVGNLSTL (338 aa)). Ser616 functions as the For malonyltransferase activity in the catalytic mechanism. The N-terminal hotdog fold stretch occupies residues 886–1004 (MPFYSESSEL…GFMTTEVMDK (119 aa)). The 283-residue stretch at 886 to 1168 (MPFYSESSEL…SKHWTGAVPT (283 aa)) folds into the PKS/mFAS DH domain. The segment at 894 to 1083 (ELAVKMKRSR…PSLLDSCIHG (190 aa)) is dehydratase (DH) domain. His925 acts as the Proton acceptor; for dehydratase activity in catalysis. A C-terminal hotdog fold region spans residues 1018-1168 (TTPADISNLY…SKHWTGAVPT (151 aa)). Asp1078 (proton donor; for dehydratase activity) is an active-site residue. Positions 1101–1449 (PSHIGRVTLY…KFQVVDGAQD (349 aa)) are methyltransferase (CMet) domain. The tract at residues 1213–1232 (APPSANGHANGHANGSANGS) is disordered. The interval 1518-1840 (TGTFDGAVAT…LPSDFSVSQS (323 aa)) is enoyl reductase (ER) domain. The interval 1842 to 2096 (ALADDKTYLV…SESVLYNHLV (255 aa)) is ketoreductase (KR) domain. The Carrier domain maps to 2109-2196 (DPYEVLQEIV…TAVSTAEKPF (88 aa)). Residues 2200-2414 (AMHQPGQTIL…WASSDATTRM (215 aa)) are thioesterase (TE) domain. Residues 2608–2809 (YRQNKVFTSM…ATGYSNVQVC (202 aa)) form a methyltransferase (CMet) domain region.

The protein operates within mycotoxin biosynthesis. Highly reducing polyketide synthase; part of the gene cluster that mediates the biosynthesis of strobilurin A, an antifungal polyketide that contains a key beta-methoxyacrylate toxophore that targets the complex III of the mitochondrial electron transport chain. Strobilurin biosynthesis begins with construction of benzoyl CoA by step-wise elimination of ammonia from phenylalanine by the phenylalanine ammonia-lyase str11, oxygenation by str8 and retro-Claisen reaction to form benzoic acid, which is activated to its CoA thiolester benzoyl CoA by the dedicated CoA ligase str10. Benzoyl CoA forms the starter unit for the highly reducing polyketide synthase stpks1 that produces the polyketide prestrobilutin A. The FAD-dependent oxygenase str9 then catalyzes the key oxidative rearrangement responsible for the creation of the beta-methoxyacrylate toxophore. Str9 performs epoxidation of the 2,3 olefin of prestrobilutin A, followed by Meinwald rearrangement to furnish the aldehyde intermediate. Rapid enolization of the aldehyde intermediate would give the beta-methoxyacrylate skeleton and methylations catalyzed by str2 and str3 complete the synthesis and lead to the production of strobilurin A. The short-chain dehydrogenase stl2 and the dehydrogenase str4 play a role in the shunt pathway leading to the production of bolineol. The cluster encodes no obvious halogenase gene that could be involved in production of strobilurin B, nor any obvious dimethylallyl-transferase that could be involved in the production of strobilurin G. It is possible that unknown proteins encoded in, or near, the cluster (such as str1 or stl1) may form new classes of halogenases or dimethylally-transferases, or that the responsible genes are located elsewhere on the genome. Similarly, proteins encoded by str5/str6 hydrolases appear to have no chemical role in the biosynthesis of strobilurin A. Finally, no obvious self-resistance gene is found within the cluster. This Strobilurus tenacellus protein is Highly reducing polyketide synthase stpks1.